Reading from the N-terminus, the 354-residue chain is Bacteriochlorophyll a protein (354 aa).

Positions 99, 134, 278, 285, and 286 each coordinate bacteriochlorophyll a.

As to quaternary structure, homotrimer. Each subunit contains 7 molecules of bacteriochlorophyll a.

Functionally, intermediary in the transfer of excitation energy from the chlorophyll to the reaction centers. The sequence is that of Bacteriochlorophyll a protein (fmoA) from Chlorobaculum thiosulfatiphilum (Chlorobium limicola f.sp. thiosulfatophilum).